Reading from the N-terminus, the 147-residue chain is uncharacterized protein (147 aa).

Residues 7-147 (LEINYKTDEL…GHDVLVWAPK (141 aa)) form the N-acetyltransferase domain.

This is an uncharacterized protein from Staphylococcus haemolyticus (strain JCSC1435).